A 338-amino-acid polypeptide reads, in one-letter code: Ketol-acid reductoisomerase (NADP(+)) (338 aa).

The KARI N-terminal Rossmann domain maps to 1–181 (MRVYYDKDCD…GGGRSGIIET (181 aa)). Residues 24–27 (YGSQ), Arg47, Ser50, Ser52, and 82–85 (DENQ) contribute to the NADP(+) site. His107 is a catalytic residue. Gly133 contacts NADP(+). The region spanning 182–327 (TFKDETETDL…EKLRGMMPWI (146 aa)) is the KARI C-terminal knotted domain. Positions 190, 194, 226, and 230 each coordinate Mg(2+). Ser251 contributes to the substrate binding site.

Belongs to the ketol-acid reductoisomerase family. Mg(2+) is required as a cofactor.

The catalysed reaction is (2R)-2,3-dihydroxy-3-methylbutanoate + NADP(+) = (2S)-2-acetolactate + NADPH + H(+). It catalyses the reaction (2R,3R)-2,3-dihydroxy-3-methylpentanoate + NADP(+) = (S)-2-ethyl-2-hydroxy-3-oxobutanoate + NADPH + H(+). The protein operates within amino-acid biosynthesis; L-isoleucine biosynthesis; L-isoleucine from 2-oxobutanoate: step 2/4. It functions in the pathway amino-acid biosynthesis; L-valine biosynthesis; L-valine from pyruvate: step 2/4. Involved in the biosynthesis of branched-chain amino acids (BCAA). Catalyzes an alkyl-migration followed by a ketol-acid reduction of (S)-2-acetolactate (S2AL) to yield (R)-2,3-dihydroxy-isovalerate. In the isomerase reaction, S2AL is rearranged via a Mg-dependent methyl migration to produce 3-hydroxy-3-methyl-2-ketobutyrate (HMKB). In the reductase reaction, this 2-ketoacid undergoes a metal-dependent reduction by NADPH to yield (R)-2,3-dihydroxy-isovalerate. The sequence is that of Ketol-acid reductoisomerase (NADP(+)) from Chromohalobacter salexigens (strain ATCC BAA-138 / DSM 3043 / CIP 106854 / NCIMB 13768 / 1H11).